We begin with the raw amino-acid sequence, 426 residues long: Serine--tRNA ligase (426 aa).

230–232 (TAE) is an L-serine binding site. 261–263 (RSE) contributes to the ATP binding site. Residue Glu-284 coordinates L-serine. Position 348-351 (348-351 (EISS)) interacts with ATP. Ser-384 is a binding site for L-serine.

It belongs to the class-II aminoacyl-tRNA synthetase family. Type-1 seryl-tRNA synthetase subfamily. As to quaternary structure, homodimer. The tRNA molecule binds across the dimer.

The protein localises to the cytoplasm. It catalyses the reaction tRNA(Ser) + L-serine + ATP = L-seryl-tRNA(Ser) + AMP + diphosphate + H(+). The enzyme catalyses tRNA(Sec) + L-serine + ATP = L-seryl-tRNA(Sec) + AMP + diphosphate + H(+). It participates in aminoacyl-tRNA biosynthesis; selenocysteinyl-tRNA(Sec) biosynthesis; L-seryl-tRNA(Sec) from L-serine and tRNA(Sec): step 1/1. Catalyzes the attachment of serine to tRNA(Ser). Is also able to aminoacylate tRNA(Sec) with serine, to form the misacylated tRNA L-seryl-tRNA(Sec), which will be further converted into selenocysteinyl-tRNA(Sec). The sequence is that of Serine--tRNA ligase from Streptococcus mutans serotype c (strain ATCC 700610 / UA159).